A 364-amino-acid chain; its full sequence is Cobalt-precorrin-5B C(1)-methyltransferase (364 aa).

Belongs to the CbiD family.

The enzyme catalyses Co-precorrin-5B + S-adenosyl-L-methionine = Co-precorrin-6A + S-adenosyl-L-homocysteine. It functions in the pathway cofactor biosynthesis; adenosylcobalamin biosynthesis; cob(II)yrinate a,c-diamide from sirohydrochlorin (anaerobic route): step 6/10. In terms of biological role, catalyzes the methylation of C-1 in cobalt-precorrin-5B to form cobalt-precorrin-6A. This is Cobalt-precorrin-5B C(1)-methyltransferase from Pseudomonas putida (strain W619).